The primary structure comprises 473 residues: Protein AUXIN RESPONSE 4 (473 aa).

Residues 1 to 10 are compositionally biased toward acidic residues; the sequence is MAIITEEEED. The segment at 1–38 is disordered; that stretch reads MAIITEEEEDPKTLNPPKNKPKDSDFTKSESTMKNPKP. The span at 29–38 shows a compositional bias: polar residues; the sequence is SESTMKNPKP. Residues 44 to 64 form a helical membrane-spanning segment; sequence FPFWFYFTVVVSLATIIFISL. Residues 119-283 form the AB hydrolase-1 domain; the sequence is TVVIVHGLGL…DSSISPALPL (165 aa).

In terms of tissue distribution, most abundant in root tissue, lesser amounts in rosette leaves, stems and flowers and very little in mature siliques.

Its subcellular location is the endoplasmic reticulum membrane. In terms of biological role, required for the auxin influx facilitator AUX1 polar trafficking and its asymmetric localization within the plasma membrane. Not involved in the PIN proteins localization. This chain is Protein AUXIN RESPONSE 4 (AXR4), found in Arabidopsis thaliana (Mouse-ear cress).